The sequence spans 695 residues: ATP-dependent zinc metalloprotease FTSH 2, chloroplastic (695 aa).

A chloroplast-targeting transit peptide spans 1 to 47; that stretch reads MAASSACLVGNGLSVNTTTKQRLSKHFSGRQTSFSSVIRTSKVNVVK. Residues 48 to 82 constitute a thylakoid transit peptide; sequence ASLDGKKKQEGRRDFLKILLGNAGVGLVASGKANA. At 83 to 167 the chain is on the lumenal, thylakoid side; it reads DEQGVSSSRM…AHNAQEDQGS (85 aa). The helical transmembrane segment at 168–188 threads the bilayer; that stretch reads VLFNLIGNLAFPALLIGGLFL. The Stromal portion of the chain corresponds to 189 to 695; sequence LSRRSGGGMG…PASAPTPAAV (507 aa). 267 to 274 provides a ligand contact to ATP; the sequence is GPPGTGKT. Residue His488 coordinates Zn(2+). Glu489 is an active-site residue. Zn(2+) is bound by residues His492 and Asp566. Residues 673-695 form a disordered region; it reads PPENRVPSSTTTTPASAPTPAAV. The span at 679–695 shows a compositional bias: low complexity; it reads PSSTTTTPASAPTPAAV.

In the N-terminal section; belongs to the AAA ATPase family. The protein in the C-terminal section; belongs to the peptidase M41 family. In terms of assembly, interacts with CHIP and FTSH5. Heterohexamers with FTSH1, FTSH5 and FTSH8. May also form homooligomers. Requires Zn(2+) as cofactor. The FTSH2 precursor is ubiquitinated by CHIP in the cytoplasm. Expressed in cotyledons, cauline and rosette leaves, stems, sepals, flovers and siliques. Very low in roots.

Its subcellular location is the plastid. The protein localises to the chloroplast thylakoid membrane. Part of a complex that function as an ATP-dependent zinc metallopeptidase. Involved in the thylakoid formation and in the removal of damaged D1 in the photosystem II, preventing cell death under high-intensity light conditions, but not involved in thermotolerance. The polypeptide is ATP-dependent zinc metalloprotease FTSH 2, chloroplastic (FTSH2) (Arabidopsis thaliana (Mouse-ear cress)).